A 583-amino-acid polypeptide reads, in one-letter code: J protein JJJ2 (583 aa).

The region spanning 11 to 79 (RTTYYSILGL…KLRYDRDLKI (69 aa)) is the J domain. Positions 215 to 224 (SYSEDPNSCL) are enriched in polar residues. Positions 215 to 313 (SYSEDPNSCL…SGSHDSNLQS (99 aa)) are disordered. A Phosphoserine modification is found at serine 229. Over residues 240 to 252 (QQQQQQQQQQQQQ) the composition is skewed to low complexity. Basic and acidic residues predominate over residues 262–281 (SPDEEKKNNKEPKRESRVSP). Polar residues predominate over residues 298 to 313 (KTSTFSSGSHDSNLQS).

The protein resides in the cytoplasm. Its subcellular location is the nucleus. The polypeptide is J protein JJJ2 (JJJ2) (Saccharomyces cerevisiae (strain ATCC 204508 / S288c) (Baker's yeast)).